The primary structure comprises 264 residues: ATP synthase subunit a (264 aa).

6 helical membrane passes run 29-49 (TWHI…LWIF), 87-107 (NALI…MNFM), 134-154 (DLNI…YYSI), 177-197 (IPVN…SLAL), 208-228 (LIFI…SLGV), and 235-255 (LIFH…LTIV).

This sequence belongs to the ATPase A chain family. As to quaternary structure, F-type ATPases have 2 components, CF(1) - the catalytic core - and CF(0) - the membrane proton channel. CF(1) has five subunits: alpha(3), beta(3), gamma(1), delta(1), epsilon(1). CF(0) has three main subunits: a(1), b(2) and c(9-12). The alpha and beta chains form an alternating ring which encloses part of the gamma chain. CF(1) is attached to CF(0) by a central stalk formed by the gamma and epsilon chains, while a peripheral stalk is formed by the delta and b chains.

The protein localises to the cell inner membrane. Functionally, key component of the proton channel; it plays a direct role in the translocation of protons across the membrane. The sequence is that of ATP synthase subunit a from Shewanella amazonensis (strain ATCC BAA-1098 / SB2B).